The sequence spans 526 residues: UDP-glycosyltransferase UGT5 (526 aa).

The Lumenal segment spans residues 1–474 (MIFFYFLTLT…TAAVDMPWYQ (474 aa)). N-linked (GlcNAc...) asparagine glycans are attached at residues Asn49, Asn124, and Asn283. A helical membrane pass occupies residues 475-495 (YLLLDVIAFLIFILVSVILII). At 496–526 (YYGVKISLRYLCALIFGNSSSLKPTKKVKDN) the chain is on the cytoplasmic side.

It belongs to the UDP-glycosyltransferase family.

The protein resides in the microsome membrane. Functionally, catalyzes the transfer of a glycosyl group from a UDP-sugar to an acceptor molecule. The sequence is that of UDP-glycosyltransferase UGT5 from Dactylopius coccus (Cochineal).